A 139-amino-acid polypeptide reads, in one-letter code: D-ribose pyranase (139 aa).

His-20 functions as the Proton donor in the catalytic mechanism. Residues Asp-28, His-106, and 128–130 (YAN) contribute to the substrate site.

Belongs to the RbsD / FucU family. RbsD subfamily. In terms of assembly, homodecamer.

It is found in the cytoplasm. The enzyme catalyses beta-D-ribopyranose = beta-D-ribofuranose. It functions in the pathway carbohydrate metabolism; D-ribose degradation; D-ribose 5-phosphate from beta-D-ribopyranose: step 1/2. Functionally, catalyzes the interconversion of beta-pyran and beta-furan forms of D-ribose. In Shewanella halifaxensis (strain HAW-EB4), this protein is D-ribose pyranase.